Consider the following 201-residue polypeptide: Small ribosomal subunit protein uS4c (201 aa).

The segment at 20 to 44 (GLTNKKPRAGSDLRNQSRSGKKSQY) is disordered. The region spanning 89 to 150 (MRLDNILFRL…EQKSKALIQI (62 aa)) is the S4 RNA-binding domain.

Belongs to the universal ribosomal protein uS4 family. As to quaternary structure, part of the 30S ribosomal subunit. Contacts protein S5. The interaction surface between S4 and S5 is involved in control of translational fidelity.

Its subcellular location is the plastid. It localises to the chloroplast. One of the primary rRNA binding proteins, it binds directly to 16S rRNA where it nucleates assembly of the body of the 30S subunit. Its function is as follows. With S5 and S12 plays an important role in translational accuracy. This Nicotiana tomentosiformis (Tobacco) protein is Small ribosomal subunit protein uS4c (rps4).